A 256-amino-acid polypeptide reads, in one-letter code: Ubiquinone biosynthesis O-methyltransferase (256 aa).

4 residues coordinate S-adenosyl-L-methionine: Arg44, Gly80, Asp101, and Met144.

The protein belongs to the methyltransferase superfamily. UbiG/COQ3 family.

It catalyses the reaction a 3-demethylubiquinol + S-adenosyl-L-methionine = a ubiquinol + S-adenosyl-L-homocysteine + H(+). The enzyme catalyses a 3-(all-trans-polyprenyl)benzene-1,2-diol + S-adenosyl-L-methionine = a 2-methoxy-6-(all-trans-polyprenyl)phenol + S-adenosyl-L-homocysteine + H(+). It participates in cofactor biosynthesis; ubiquinone biosynthesis. Functionally, O-methyltransferase that catalyzes the 2 O-methylation steps in the ubiquinone biosynthetic pathway. The protein is Ubiquinone biosynthesis O-methyltransferase of Methylocella silvestris (strain DSM 15510 / CIP 108128 / LMG 27833 / NCIMB 13906 / BL2).